A 76-amino-acid polypeptide reads, in one-letter code: Bacteriocin uberolysin (76 aa).

Positions Met-1–Glu-6 are excised as a propeptide. Residues Leu-7–Trp-76 constitute a cross-link (cyclopeptide (Leu-Trp)).

Belongs to the bacteriocin class V family.

It is found in the secreted. Its function is as follows. Cyclopeptide antibiotic with bacteriolytic activity against most streptococci (except S.rattus and S.mutans), Listeria spp., enterococci and staphylococci. The sequence is that of Bacteriocin uberolysin (ublA) from Streptococcus uberis.